Here is a 155-residue protein sequence, read N- to C-terminus: DNA gyrase inhibitor (155 aa).

Belongs to the DNA gyrase inhibitor family. Interacts with DNA gyrase.

The protein resides in the cytoplasm. Its function is as follows. Inhibits the supercoiling activity of DNA gyrase. Acts by inhibiting DNA gyrase at an early step, prior to (or at the step of) binding of DNA by the gyrase. It protects cells against toxins that target DNA gyrase, by inhibiting activity of these toxins and reducing the formation of lethal double-strand breaks in the cell. In Citrobacter koseri (strain ATCC BAA-895 / CDC 4225-83 / SGSC4696), this protein is DNA gyrase inhibitor.